Reading from the N-terminus, the 590-residue chain is Aspartate--tRNA(Asp/Asn) ligase (590 aa).

L-aspartate is bound at residue Glu175. The interval 199–202 (QQYK) is aspartate. Residues Arg221 and His450 each contribute to the L-aspartate site. 221–223 (RDE) lines the ATP pocket. Residue Glu484 participates in ATP binding. Arg491 is an L-aspartate binding site. Position 536-539 (536-539 (GVDR)) interacts with ATP.

Belongs to the class-II aminoacyl-tRNA synthetase family. Type 1 subfamily. Homodimer.

Its subcellular location is the cytoplasm. The catalysed reaction is tRNA(Asx) + L-aspartate + ATP = L-aspartyl-tRNA(Asx) + AMP + diphosphate. Functionally, aspartyl-tRNA synthetase with relaxed tRNA specificity since it is able to aspartylate not only its cognate tRNA(Asp) but also tRNA(Asn). Reaction proceeds in two steps: L-aspartate is first activated by ATP to form Asp-AMP and then transferred to the acceptor end of tRNA(Asp/Asn). The protein is Aspartate--tRNA(Asp/Asn) ligase of Rhodopseudomonas palustris (strain BisB5).